The primary structure comprises 152 residues: Coiled-coil domain-containing protein 182 (152 aa).

Residues 46-109 (ADLEILQQKV…RLREEEDRGI (64 aa)) adopt a coiled-coil conformation.

The sequence is that of Coiled-coil domain-containing protein 182 (Ccdc182) from Mus musculus (Mouse).